The following is a 393-amino-acid chain: Protein TsgA (393 aa).

Transmembrane regions (helical) follow at residues 11-31, 51-71, 78-98, 101-121, 134-154, 162-182, 206-226, 245-265, 273-293, 298-318, 332-352, and 361-381; these read WISF…GMVM, FLNA…EIIP, FGFI…SLAL, AAMF…TFLI, LLFT…VAAF, WYWV…LTFG, IGVL…LGFI, ALVS…SFIL, ILTV…TGTQ, WFIL…ITLG, FILT…GPIV, and LLTA…LGFV.

It belongs to the major facilitator superfamily. TsgA family.

The protein resides in the cell inner membrane. The polypeptide is Protein TsgA (Salmonella paratyphi B (strain ATCC BAA-1250 / SPB7)).